The sequence spans 194 residues: RNA polymerase II subunit A C-terminal domain phosphatase SSU72 like protein 1 (194 aa).

The protein belongs to the SSU72 phosphatase family.

It localises to the nucleus. The enzyme catalyses O-phospho-L-seryl-[protein] + H2O = L-seryl-[protein] + phosphate. It catalyses the reaction O-phospho-L-threonyl-[protein] + H2O = L-threonyl-[protein] + phosphate. In terms of biological role, protein phosphatase that catalyzes the dephosphorylation of the C-terminal domain of RNA polymerase II. Plays a role in RNA processing and termination. The chain is RNA polymerase II subunit A C-terminal domain phosphatase SSU72 like protein 1 from Homo sapiens (Human).